The primary structure comprises 685 residues: DNA ligase (685 aa).

NAD(+) contacts are provided by residues 34–38 (DAVFD), 83–84 (SL), and Glu-113. The active-site N6-AMP-lysine intermediate is the Lys-115. Residues Arg-136, Glu-173, Lys-297, and Lys-321 each coordinate NAD(+). Cys-415, Cys-418, Cys-433, and Cys-438 together coordinate Zn(2+). Positions 607-685 (QEKLQFSGKT…EQELMTLISN (79 aa)) constitute a BRCT domain.

It belongs to the NAD-dependent DNA ligase family. LigA subfamily. Requires Mg(2+) as cofactor. Mn(2+) is required as a cofactor.

It catalyses the reaction NAD(+) + (deoxyribonucleotide)n-3'-hydroxyl + 5'-phospho-(deoxyribonucleotide)m = (deoxyribonucleotide)n+m + AMP + beta-nicotinamide D-nucleotide.. DNA ligase that catalyzes the formation of phosphodiester linkages between 5'-phosphoryl and 3'-hydroxyl groups in double-stranded DNA using NAD as a coenzyme and as the energy source for the reaction. It is essential for DNA replication and repair of damaged DNA. The sequence is that of DNA ligase from Prochlorococcus marinus (strain SARG / CCMP1375 / SS120).